Consider the following 103-residue polypeptide: Small ribosomal subunit protein uS14c (103 aa).

The tract at residues Ser-26 to Asn-56 is disordered.

The protein belongs to the universal ribosomal protein uS14 family. In terms of assembly, part of the 30S ribosomal subunit.

The protein resides in the plastid. The protein localises to the chloroplast. Binds 16S rRNA, required for the assembly of 30S particles. This chain is Small ribosomal subunit protein uS14c, found in Saccharum officinarum (Sugarcane).